The primary structure comprises 338 residues: tRNA (cytosine(34)-C(5))-methyltransferase, mitochondrial (338 aa).

S-adenosyl-L-methionine-binding positions include 140-146, Glu-163, Asp-194, and Asp-212; that span reads CAAPGGK. The active-site Nucleophile is Cys-266.

It belongs to the class I-like SAM-binding methyltransferase superfamily. RsmB/NOP family.

The protein localises to the mitochondrion matrix. The enzyme catalyses cytidine(34) in mitochondrial tRNA + S-adenosyl-L-methionine = 5-methylcytidine(34) in mitochondrial tRNA + S-adenosyl-L-homocysteine + H(+). Functionally, mitochondrial tRNA methyltransferase that mediates methylation of cytosine to 5-methylcytosine (m5C) at position 34 of mt-tRNA(Met). mt-tRNA(Met) methylation at cytosine(34) takes place at the wobble position of the anticodon and initiates the formation of 5-formylcytosine (f(5)c) at this position. mt-tRNA(Met) containing the f(5)c modification at the wobble position enables recognition of the AUA codon in addition to the AUG codon, expanding codon recognition in mitochondrial translation. The sequence is that of tRNA (cytosine(34)-C(5))-methyltransferase, mitochondrial from Bos taurus (Bovine).